Here is a 163-residue protein sequence, read N- to C-terminus: MPSFDIVSEITLHEVRNAVENANRVLSTRYDFRGVEAVIELNEKNETIKITTESDFQLEQLIEILIGACIKRGIEHSSLDIPAESEHHGKLYSKEIKLKQGIETEMAKKITKLVKDSKIKVQTQIQGEQVRVTGKSRDDLQAVIQLVKGAELGQPFQFNNFRD.

The protein belongs to the YajQ family.

Its function is as follows. Nucleotide-binding protein. The polypeptide is Nucleotide-binding protein CGSHiGG_08790 (Haemophilus influenzae (strain PittGG)).